Here is a 241-residue protein sequence, read N- to C-terminus: 2-C-methyl-D-erythritol 4-phosphate cytidylyltransferase (241 aa).

Belongs to the IspD/TarI cytidylyltransferase family. IspD subfamily.

The enzyme catalyses 2-C-methyl-D-erythritol 4-phosphate + CTP + H(+) = 4-CDP-2-C-methyl-D-erythritol + diphosphate. It functions in the pathway isoprenoid biosynthesis; isopentenyl diphosphate biosynthesis via DXP pathway; isopentenyl diphosphate from 1-deoxy-D-xylulose 5-phosphate: step 2/6. Its function is as follows. Catalyzes the formation of 4-diphosphocytidyl-2-C-methyl-D-erythritol from CTP and 2-C-methyl-D-erythritol 4-phosphate (MEP). This is 2-C-methyl-D-erythritol 4-phosphate cytidylyltransferase from Mycobacterium leprae (strain Br4923).